Consider the following 197-residue polypeptide: Cytochrome c oxidase polypeptide 5, mitochondrial (197 aa).

A mitochondrion-targeting transit peptide spans 1–13 (MFLRSVTRAAARS). Residues 14-129 (SAVPTTGLRS…KGENLKIFFK (116 aa)) are Mitochondrial matrix-facing. Residues 130 to 147 (VAQLTLVSFGIFYVIHLF) traverse the membrane as a helical segment. The Mitochondrial intermembrane segment spans residues 148 to 197 (AKPQPKTMTKEWQEASNEYAKQEKINPIYGISAEGYEGKGFVQSPPAEKQ).

It belongs to the cytochrome c oxidase IV family. As to quaternary structure, component of the cytochrome c oxidase (complex IV, CIV), a multisubunit enzyme composed of a catalytic core of 3 subunits and seevral supernumerary subunits. The complex exists as a monomer or a dimer and forms supercomplexes (SCs) in the inner mitochondrial membrane with ubiquinol-cytochrome c oxidoreductase (cytochrome b-c1 complex, complex III, CIII).

The protein localises to the mitochondrion inner membrane. It participates in energy metabolism; oxidative phosphorylation. Functionally, component of the cytochrome c oxidase, the last enzyme in the mitochondrial electron transport chain which drives oxidative phosphorylation. The respiratory chain contains 3 multisubunit complexes succinate dehydrogenase (complex II, CII), ubiquinol-cytochrome c oxidoreductase (cytochrome b-c1 complex, complex III, CIII) and cytochrome c oxidase (complex IV, CIV), that cooperate to transfer electrons derived from NADH and succinate to molecular oxygen, creating an electrochemical gradient over the inner membrane that drives transmembrane transport and the ATP synthase. Cytochrome c oxidase is the component of the respiratory chain that catalyzes the reduction of oxygen to water. Electrons originating from reduced cytochrome c in the intermembrane space (IMS) are transferred via the dinuclear copper A center (CU(A)) of subunit 2 and heme A of subunit 1 to the active site in subunit 1, a binuclear center (BNC) formed by heme A3 and copper B (CU(B)). The BNC reduces molecular oxygen to 2 water molecules using 4 electrons from cytochrome c in the IMS and 4 protons from the mitochondrial matrix. This chain is Cytochrome c oxidase polypeptide 5, mitochondrial (cox5), found in Aspergillus niger.